A 415-amino-acid chain; its full sequence is MAFNKLSIENLDLAGKRVLMRVDFNVPIKEGKITSNQRIVAALDSIKLALSKKAKSVVLMSHLGRPDGNKNIKYTLAPVAAELKTLLGQDVIFLSDCVGSEVEAACKDPAPGSVILLENVRFYVEEEGKGLDASGGKVKADPAKVKEFRASLAKLGDVYVNDAFGTAHRAHSSMMGDGFEQRAAGLLLNKELKYFSQALDKPPNPFLAILGGAKVADKIQLIENLLDKVNEMIIGGGMAFTFLKVLNNMKIGGSLFDEEGSKIVEKLVEKAKKNNVQLHLPVDFVCGDKFAENAAVSEATVEAGIPDGHMGLDVGPKTRELFAAPIARAKLIVWNGPPGVFEFPNFANGTKSIMDGVVAATKNGTVSIIGGGDTASCCAKWNTEALVSHVSTGGGASLELLEGKTLPGVAALTSA.

Val22, Asp23, Phe24, Asn25, Gln37, Arg38, Ser61, His62, Gly64, Arg65, Arg121, His168, and Arg169 together coordinate (2R)-3-phosphoglycerate. Gly212 lines the ADP pocket. Gly212 lines the CDP pocket. AMP contacts are provided by Ala213 and Lys214. Ala213 provides a ligand contact to ATP. Ala213 serves as a coordination point for Mg(2+). Residues Ala216 and Asp217 each coordinate Mg(2+). Asp217 is a CDP binding site. AMP is bound at residue Lys218. An ATP-binding site is contributed by Lys218. Gly236 is an ADP binding site. Gly236 contacts CDP. Gly237 and Gly311 together coordinate AMP. Gly237 and Gly311 together coordinate ATP. The CDP site is built by Gly336 and Phe341. Residue Phe341 participates in ADP binding. Glu342 provides a ligand contact to AMP. The ATP site is built by Glu342, Asp373, and Thr374. Residue Asp373 participates in Mg(2+) binding.

Belongs to the phosphoglycerate kinase family. Monomer. Requires Mg(2+) as cofactor.

It localises to the cytoplasm. It carries out the reaction (2R)-3-phosphoglycerate + ATP = (2R)-3-phospho-glyceroyl phosphate + ADP. Its pathway is carbohydrate degradation; glycolysis; pyruvate from D-glyceraldehyde 3-phosphate: step 2/5. Functionally, enzyme of the glycolytic pathway. Glycolysis is essential in glial cells but not in neurons; neurons rely on the citric acid cycle for their energy needs, and on lactate and alanine secreted into the hemolymph by glial cells to fuel it. This chain is Phosphoglycerate kinase, found in Drosophila melanogaster (Fruit fly).